Consider the following 650-residue polypeptide: Probable potassium transport system protein Kup 1 (650 aa).

The next 12 membrane-spanning stretches (helical) occupy residues 12–32 (GLLI…LYVM), 54–74 (ISLV…IIAL), 97–117 (WLVL…TLTP), 139–159 (VSSQ…LFSI), 170–190 (AFGP…LINM), 216–236 (AGIF…ALYS), 249–269 (SWPF…VWIL), 295–315 (LAAI…LITG), 344–364 (IYIP…VLYF), 375–395 (GLSI…WLAM), 400–420 (PVWN…FMIS), and 428–448 (GGYV…VWYY).

The protein belongs to the HAK/KUP transporter (TC 2.A.72) family.

The protein localises to the cell membrane. The enzyme catalyses K(+)(in) + H(+)(in) = K(+)(out) + H(+)(out). In terms of biological role, transport of potassium into the cell. Likely operates as a K(+):H(+) symporter. The protein is Probable potassium transport system protein Kup 1 of Lactobacillus acidophilus (strain ATCC 700396 / NCK56 / N2 / NCFM).